Consider the following 49-residue polypeptide: Large ribosomal subunit protein bL33 (49 aa).

Belongs to the bacterial ribosomal protein bL33 family.

In Desulforamulus reducens (strain ATCC BAA-1160 / DSM 100696 / MI-1) (Desulfotomaculum reducens), this protein is Large ribosomal subunit protein bL33.